The chain runs to 445 residues: ATP-dependent protease ATPase subunit HslU (445 aa).

Residues I17, 59-64 (GVGKTE), D254, E319, and R391 contribute to the ATP site.

It belongs to the ClpX chaperone family. HslU subfamily. As to quaternary structure, a double ring-shaped homohexamer of HslV is capped on each side by a ring-shaped HslU homohexamer. The assembly of the HslU/HslV complex is dependent on binding of ATP.

The protein resides in the cytoplasm. In terms of biological role, ATPase subunit of a proteasome-like degradation complex; this subunit has chaperone activity. The binding of ATP and its subsequent hydrolysis by HslU are essential for unfolding of protein substrates subsequently hydrolyzed by HslV. HslU recognizes the N-terminal part of its protein substrates and unfolds these before they are guided to HslV for hydrolysis. The polypeptide is ATP-dependent protease ATPase subunit HslU (Pseudomonas fluorescens (strain SBW25)).